The sequence spans 459 residues: Adenylosuccinate synthetase isozyme 1 C (459 aa).

Residues 1 to 31 (MSFSWSAKDHKSYTNPPSNPTQGLKRPRNDT) form a disordered region. Residues 13–22 (YTNPPSNPTQ) are compositionally biased toward polar residues. Residues 44–50 (GDEGKGK) and 72–74 (GHT) each bind GTP. Aspartate 45 serves as the catalytic Proton acceptor. Mg(2+) contacts are provided by aspartate 45 and glycine 72. Residue aspartate 45 coordinates substrate. IMP-binding positions include 45–48 (DEGK), 70–73 (NAGH), threonine 165, arginine 179, asparagine 258, threonine 273, and arginine 337. Histidine 73 (proton donor) is an active-site residue. Residue 333–339 (VTTGRKR) participates in substrate binding. GTP is bound by residues arginine 339, 365–367 (KLD), and 447–450 (GVGK).

The protein belongs to the adenylosuccinate synthetase family. In terms of assembly, homodimer. Mg(2+) serves as cofactor.

It is found in the cytoplasm. The enzyme catalyses IMP + L-aspartate + GTP = N(6)-(1,2-dicarboxyethyl)-AMP + GDP + phosphate + 2 H(+). The protein operates within purine metabolism; AMP biosynthesis via de novo pathway; AMP from IMP: step 1/2. Component of the purine nucleotide cycle (PNC), which interconverts IMP and AMP to regulate the nucleotide levels in various tissues, and which contributes to glycolysis and ammoniagenesis. Catalyzes the first committed step in the biosynthesis of AMP from IMP. The chain is Adenylosuccinate synthetase isozyme 1 C (adss1c) from Salmo salar (Atlantic salmon).